The sequence spans 886 residues: UPF0592 membrane protein C7D4.03c (886 aa).

Residues 87–112 (ILNEPYNESPSSSSSDSSSRSTSPFS) are disordered. Residues 95 to 112 (SPSSSSSDSSSRSTSPFS) are compositionally biased toward low complexity. 3 consecutive transmembrane segments (helical) span residues 277–297 (FCASILVLSFFQLPLFADHFL), 374–394 (GGFFFEFLSCYHSFLALQFSF), and 400–420 (VIYFAPGYICLHAYLLELTIS).

Belongs to the UPF0592 family.

The protein localises to the membrane. In Schizosaccharomyces pombe (strain 972 / ATCC 24843) (Fission yeast), this protein is UPF0592 membrane protein C7D4.03c.